Reading from the N-terminus, the 363-residue chain is tRNA N6-adenosine threonylcarbamoyltransferase (363 aa).

Fe cation-binding residues include His127 and His131. Residues 150–154 (LISGG), Asp183, Gly196, and Asn290 each bind substrate. Asp318 contributes to the Fe cation binding site.

It belongs to the KAE1 / TsaD family. Fe(2+) serves as cofactor.

It localises to the cytoplasm. It catalyses the reaction L-threonylcarbamoyladenylate + adenosine(37) in tRNA = N(6)-L-threonylcarbamoyladenosine(37) in tRNA + AMP + H(+). Its function is as follows. Required for the formation of a threonylcarbamoyl group on adenosine at position 37 (t(6)A37) in tRNAs that read codons beginning with adenine. Is involved in the transfer of the threonylcarbamoyl moiety of threonylcarbamoyl-AMP (TC-AMP) to the N6 group of A37, together with TsaE and TsaB. TsaD likely plays a direct catalytic role in this reaction. This chain is tRNA N6-adenosine threonylcarbamoyltransferase, found in Zymomonas mobilis subsp. mobilis (strain ATCC 31821 / ZM4 / CP4).